The primary structure comprises 215 residues: Probable transaldolase (215 aa).

K83 serves as the catalytic Schiff-base intermediate with substrate.

This sequence belongs to the transaldolase family. Type 3B subfamily.

Its subcellular location is the cytoplasm. The catalysed reaction is D-sedoheptulose 7-phosphate + D-glyceraldehyde 3-phosphate = D-erythrose 4-phosphate + beta-D-fructose 6-phosphate. The protein operates within carbohydrate degradation; pentose phosphate pathway; D-glyceraldehyde 3-phosphate and beta-D-fructose 6-phosphate from D-ribose 5-phosphate and D-xylulose 5-phosphate (non-oxidative stage): step 2/3. Functionally, transaldolase is important for the balance of metabolites in the pentose-phosphate pathway. The sequence is that of Probable transaldolase from Clostridium perfringens (strain 13 / Type A).